Here is a 598-residue protein sequence, read N- to C-terminus: Fibulin-1 (598 aa).

Cystine bridges form between Ala1–Cys25, Cys7–Cys26, Cys28–Cys52, Cys29–Cys59, Cys42–Cys60, Cys96–Cys106, Cys102–Cys115, Cys117–Cys130, Cys136–Cys149, Cys143–Cys158, Cys164–Cys176, Cys182–Cys195, Cys189–Cys204, Cys210–Cys222, Cys228–Cys242, Cys257–Cys270, Cys275–Cys288, Cys282–Cys297, Cys299–Cys312, Cys318–Cys330, Cys326–Cys339, Cys341–Cys354, Cys360–Cys369, Cys365–Cys378, Cys380–Cys394, Cys400–Cys413, Cys409–Cys422, Cys424–Cys438, Cys444–Cys457, Cys451–Cys466, and Cys471–Cys483. 2 consecutive Anaphylatoxin-like domains span residues 1-27 (ANEQ…RCCH) and 28-60 (CCLL…RACC). Asn14 is a glycosylation site (N-linked (GlcNAc...) asparagine). In terms of domain architecture, EGF-like 1 spans 92–131 (LNDRCRGGGPCKQQCRDTGDEVVCSCFVGYQLLSDGVSCE). An EGF-like 2; calcium-binding domain is found at 132–177 (DVNECITGSHSCRLGESCINTVGSFRCQRDSSCGTGYELTEDNSCK). The EGF-like 3; calcium-binding domain maps to 178–223 (DIDQCESGIHNCLPDFICQNTLGSFRCRPKLQCKNGFIQDALANCI). Positions 224–270 (DINECLSIVSAPCPTGHTCINTEGSYTQKNVPNCGRGYHLNEEGTRC) constitute an EGF-like 4; calcium-binding domain. The EGF-like 5; calcium-binding domain occupies 271-313 (DVNECAPPAEPCGKGHRCVNSPGSFRCECKTGYYFDGISRMCV). Residues 271-355 (DVNECAPPAE…RLSVDGRSCE (85 aa)) form a self-association and FN1-binding region. The region spanning 314–355 (DVNECQRYPGRLCGHKCENTLGSYVCSCSVGFRLSVDGRSCE) is the EGF-like 6; calcium-binding domain. The 40-residue stretch at 356–395 (DINECSSSPCSQECANVYGSYQCYCRRGYQLSDVDGVTCE) folds into the EGF-like 7; calcium-binding domain. One can recognise an EGF-like 8; calcium-binding domain in the interval 396–439 (DIDECALPTGGHICSYRCINIPGSFQCSCPASGYRLAPNGRNCQ). In terms of domain architecture, EGF-like 9; calcium-binding spans 440 to 484 (DIDECVTGIHNCSINETCFNIQGGFRCLAFECPENYRRSAATRCE). N-linked (GlcNAc...) asparagine glycosylation is found at Asn450 and Asn454.

This sequence belongs to the fibulin family. As to quaternary structure, homomultimerizes and interacts with various extracellular matrix components. Interacts with FBLN7. Interacts with the mature/soluble form of DTR. Interacts with CCN3.

Its subcellular location is the secreted. It is found in the extracellular space. It localises to the extracellular matrix. Functionally, incorporated into fibronectin-containing matrix fibers. May play a role in cell adhesion and migration along protein fibers within the extracellular matrix (ECM). Could be important for certain developmental processes and contribute to the supramolecular organization of ECM architecture, in particular to those of basement membranes. May serve to anchor the mature/soluble form of DTR to its fibers as it migrates through the extracellular matrix. The direct physical association with DTR may be useful in such tissue developmental processes as wound healing. The protein is Fibulin-1 (FBLN1) of Chlorocebus aethiops (Green monkey).